We begin with the raw amino-acid sequence, 752 residues long: DNA topoisomerase 4 subunit A (752 aa).

Residues L31–M494 enclose the Topo IIA-type catalytic domain. The O-(5'-phospho-DNA)-tyrosine intermediate role is filled by Y120. A disordered region spans residues Y472–H492. Positions G473–H492 are enriched in basic and acidic residues.

The protein belongs to the type II topoisomerase GyrA/ParC subunit family. ParC type 1 subfamily. In terms of assembly, heterotetramer composed of ParC and ParE.

It is found in the cell membrane. The enzyme catalyses ATP-dependent breakage, passage and rejoining of double-stranded DNA.. Functionally, topoisomerase IV is essential for chromosome segregation. It relaxes supercoiled DNA. Performs the decatenation events required during the replication of a circular DNA molecule. This chain is DNA topoisomerase 4 subunit A, found in Salmonella typhimurium (strain LT2 / SGSC1412 / ATCC 700720).